The following is an 814-amino-acid chain: Plakophilin-2 (814 aa).

Residues 1–329 (MAIPGSLGEC…MTLERAVNML (329 aa)) are required for binding to single-stranded DNA. Position 44 is a phosphoserine (S44). R46 is modified (omega-N-methylarginine). Phosphoserine occurs at positions 82 and 130. 8 ARM repeats span residues 200 to 240 (TCQH…SIKG), 309 to 352 (CDCL…ESFQ), 354 to 393 (SEAR…NLVF), 503 to 549 (PDGR…NLSY), 604 to 644 (PRGI…NLTA), 652 to 691 (SVAR…NLSR), 696 to 737 (QNEI…NLMQ), and 740 to 782 (YQNA…SLWA).

This sequence belongs to the beta-catenin family. In terms of assembly, interacts with DSC2. Interacts with JUP. Interacts with KRT5/CK5, KRT8/CK8, KRT14/CK14, KRT18/CK18 and VIM. Interacts (via N-terminus) with MARK3/C-TAK1. Interacts with DSP. Interacts with DSG1, DSG2 and DSG3. Interacts (via N-terminus) with CTNNB1. Interacts with CDH1. Interacts with the RNA polymerase III (Pol III) complex proteins POLR3A/RPC155, POLR3F/RPC39 and POLR3C/RPC82. Interacts with CTNNA3. Interacts (via N-terminus) with SCN5A/Nav1.5. Interacts with ANK3/ANKG and GJA1/CX43. In terms of tissue distribution, expressed in the heart (at protein level).

The protein localises to the nucleus. It localises to the cell junction. Its subcellular location is the desmosome. It is found in the cytoplasm. In terms of biological role, a component of desmosome cell-cell junctions which are required for positive regulation of cellular adhesion. Regulates focal adhesion turnover resulting in changes in focal adhesion size, cell adhesion and cell spreading, potentially via transcriptional modulation of beta-integrins. Required to maintain gingival epithelial barrier function. Important component of the desmosome that is also required for localization of desmosome component proteins such as DSC2, DSG2 and JUP to the desmosome cell-cell junction. Required for the formation of desmosome cell junctions in cardiomyocytes, thereby required for the correct formation of the heart, specifically trabeculation and formation of the atria walls. Loss of desmosome cell junctions leads to mis-localization of DSP and DSG2 resulting in disruption of cell-cell adhesion and disordered intermediate filaments. Modulates profibrotic gene expression in cardiomyocytes via regulation of DSP expression and subsequent activation of downstream TGFB1 and MAPK14/p38 MAPK signaling. Required for cardiac sodium current propagation and electrical synchrony in cardiac myocytes, via ANK3 stabilization and modulation of SCN5A/Nav1.5 localization to cell-cell junctions. Required for mitochondrial function, nuclear envelope integrity and positive regulation of SIRT3 transcription via maintaining DES localization at its nuclear envelope and cell tip anchoring points, and thereby preserving regulation of the transcriptional program. Maintenance of nuclear envelope integrity protects against DNA damage and transcriptional dysregulation of genes, especially those involved in the electron transport chain, thereby preserving mitochondrial function and protecting against superoxide radical anion generation. Binds single-stranded DNA (ssDNA). May regulate the localization of GJA1 to gap junctions in intercalated disks of the heart. The polypeptide is Plakophilin-2 (Rattus norvegicus (Rat)).